A 194-amino-acid polypeptide reads, in one-letter code: Phosphoheptose isomerase (194 aa).

The region spanning I37–A194 is the SIS domain. N52–G54 contacts substrate. Zn(2+)-binding residues include H61 and E65. Residues E65, N93–D94, S119–S121, S124, and Q172 each bind substrate. 2 residues coordinate Zn(2+): Q172 and H180.

It belongs to the SIS family. GmhA subfamily. Homotetramer. Requires Zn(2+) as cofactor.

It localises to the cytoplasm. It carries out the reaction 2 D-sedoheptulose 7-phosphate = D-glycero-alpha-D-manno-heptose 7-phosphate + D-glycero-beta-D-manno-heptose 7-phosphate. It functions in the pathway carbohydrate biosynthesis; D-glycero-D-manno-heptose 7-phosphate biosynthesis; D-glycero-alpha-D-manno-heptose 7-phosphate and D-glycero-beta-D-manno-heptose 7-phosphate from sedoheptulose 7-phosphate: step 1/1. The protein operates within bacterial outer membrane biogenesis; LOS core biosynthesis. Functionally, catalyzes the isomerization of sedoheptulose 7-phosphate in D-glycero-D-manno-heptose 7-phosphate. The polypeptide is Phosphoheptose isomerase (Haemophilus influenzae (strain ATCC 51907 / DSM 11121 / KW20 / Rd)).